The following is a 123-amino-acid chain: MYGKIIFVLLLSEIVSISASSTTEVAMHTSTSSSVTKSYISSQTNDKHKGDTYPATLGAHEVSEISVTTVYPPEEDNGEWVQPVHPFSRPAPVVIILIILCVMAGVIGTILLISYGIRLLIKA.

The signal sequence occupies residues 1–19 (MYGKIIFVLLLSEIVSISA). The chain crosses the membrane as a helical span at residues 93 to 113 (VVIILIILCVMAGVIGTILLI).

The protein belongs to the glycophorin-A family. As to quaternary structure, component of the ankyrin-1 complex in the erythrocyte, composed of ANK1, RHCE, RHAG, SLC4A1, EPB42, GYPA, GYPB and AQP1. Interacts (via the N-terminal) with RHAG; this interaction bridges the (RHAG)2(RHCE) heterotrimer with the SLC4A1 Band 3 I dimer complexed with GYPA. The N-terminal extracellular domain is heavily glycosylated on serine and threonine residues.

The protein localises to the cell membrane. Functionally, component of the ankyrin-1 complex, a multiprotein complex involved in the stability and shape of the erythrocyte membrane. The chain is Glycophorin-B from Pan troglodytes (Chimpanzee).